The sequence spans 171 residues: uncharacterized protein (171 aa).

This is an uncharacterized protein from Mycobacterium tuberculosis (strain ATCC 25618 / H37Rv).